The following is a 295-amino-acid chain: F-box only protein 8 (295 aa).

Positions 35-80 (TWVARYIPQDLLIEILTRLPPKSVMRFKCVSKFWSSLLSSRYFCNR) constitute an F-box domain.

The protein is F-box only protein 8 (FBX8) of Arabidopsis thaliana (Mouse-ear cress).